The sequence spans 218 residues: Ribosomal RNA small subunit methyltransferase J (218 aa).

S-adenosyl-L-methionine-binding positions include 55–56 (RD), 71–72 (ER), and D123.

Belongs to the methyltransferase superfamily. RsmJ family.

The protein resides in the cytoplasm. The catalysed reaction is guanosine(1516) in 16S rRNA + S-adenosyl-L-methionine = N(2)-methylguanosine(1516) in 16S rRNA + S-adenosyl-L-homocysteine + H(+). Specifically methylates the guanosine in position 1516 of 16S rRNA. The chain is Ribosomal RNA small subunit methyltransferase J from Rhodopseudomonas palustris (strain HaA2).